Here is a 206-residue protein sequence, read N- to C-terminus: Protein sym1 (206 aa).

The next 2 helical transmembrane spans lie at 107–127 (VLLD…SWMT) and 169–189 (LQYQ…FLSL).

It belongs to the peroxisomal membrane protein PXMP2/4 family.

Its subcellular location is the mitochondrion inner membrane. This Schizosaccharomyces pombe (strain 972 / ATCC 24843) (Fission yeast) protein is Protein sym1 (sym1).